The primary structure comprises 185 residues: Ribosome-recycling factor (185 aa).

The protein belongs to the RRF family.

The protein resides in the cytoplasm. Its function is as follows. Responsible for the release of ribosomes from messenger RNA at the termination of protein biosynthesis. May increase the efficiency of translation by recycling ribosomes from one round of translation to another. This is Ribosome-recycling factor from Francisella tularensis subsp. holarctica (strain FTNF002-00 / FTA).